Reading from the N-terminus, the 968-residue chain is RNA polymerase-associated protein RapA (968 aa).

The region spanning 163-332 is the Helicase ATP-binding domain; that stretch reads EVGRRYAPRV…FARLRLLDPD (170 aa). An ATP-binding site is contributed by 176-183; the sequence is DEVGLGKT. The DEAH box signature appears at 278 to 281; it reads DEAH. One can recognise a Helicase C-terminal domain in the interval 491 to 643; the sequence is RVDWLIAFLK…ELTCPSGHVL (153 aa).

This sequence belongs to the SNF2/RAD54 helicase family. RapA subfamily. As to quaternary structure, interacts with the RNAP. Has a higher affinity for the core RNAP than for the holoenzyme. Its ATPase activity is stimulated by binding to RNAP.

Transcription regulator that activates transcription by stimulating RNA polymerase (RNAP) recycling in case of stress conditions such as supercoiled DNA or high salt concentrations. Probably acts by releasing the RNAP, when it is trapped or immobilized on tightly supercoiled DNA. Does not activate transcription on linear DNA. Probably not involved in DNA repair. This is RNA polymerase-associated protein RapA from Shewanella sp. (strain W3-18-1).